A 714-amino-acid polypeptide reads, in one-letter code: Probable serine/threonine-protein kinase At1g09600 (714 aa).

The tract at residues 1–64 (MGCNCTKGTR…NVGFEERSND (64 aa)) is disordered. Glycine 2 carries N-myristoyl glycine lipidation. Residues 16–27 (VDNSNSIVSNVN) are compositionally biased toward low complexity. Over residues 31 to 46 (RRSKPKKTPKKKKKSK) the composition is skewed to basic residues. Positions 163–447 (FEKLEKIGQG…TASALESEFF (285 aa)) constitute a Protein kinase domain. ATP-binding positions include 169 to 177 (IGQGTYSSV) and lysine 192. Aspartate 287 (proton acceptor) is an active-site residue. Residues 471 to 498 (KAQEEEAKRKKDTSSKQNDSKQVSRESK) show a composition bias toward basic and acidic residues. Disordered stretches follow at residues 471–579 (KAQE…RKEL) and 693–714 (VDKK…ANGR). Composition is skewed to polar residues over residues 506–528 (NAES…NSDK) and 556–573 (GVSS…GSSR).

This sequence belongs to the protein kinase superfamily. Ser/Thr protein kinase family.

This Arabidopsis thaliana (Mouse-ear cress) protein is Probable serine/threonine-protein kinase At1g09600.